A 933-amino-acid chain; its full sequence is Potassium voltage-gated channel subfamily KQT member 5 (933 aa).

Residues 1-126 are Cytoplasmic-facing; that stretch reads MPRHHAGGEE…YNVLERPRGW (126 aa). Ser-89 carries the post-translational modification Phosphoserine. Residues 127-147 traverse the membrane as a helical segment; the sequence is AFVYHAFVFLLVFGCLILSVF. At 148–157 the chain is on the extracellular side; the sequence is STIPEHTKLA. A helical membrane pass occupies residues 158-178; that stretch reads SSCLLILEFVMIVVFGLEFII. Residues 179–201 lie on the Cytoplasmic side of the membrane; sequence RIWSAGCCCRYRGWQGRLRFARK. The chain crosses the membrane as a helical span at residues 202–222; sequence PFCVIDTIVLIASIAVVSAKT. Over 223–230 the chain is Extracellular; the sequence is QGNIFATS. Residues 231–253 form a helical; Voltage-sensor membrane-spanning segment; it reads ALRSLRFLQILRMVRMDRRGGTW. A 1,2-diacyl-sn-glycero-3-phospho-(1D-myo-inositol-4,5-bisphosphate) is bound by residues Arg-249 and Lys-265. Residues 254–267 are Cytoplasmic-facing; the sequence is KLLGSVVYAHSKEL. The helical transmembrane segment at 268–288 threads the bilayer; sequence ITAWYIGFLVLIFSSFLVYLV. The Extracellular portion of the chain corresponds to 289 to 299; sequence EKDANKEFSTY. Positions 300–320 form an intramembrane region, pore-forming; sequence ADALWWGTITLTTIGYGDKTP. At 321–326 the chain is on the extracellular side; it reads LTWLGR. Residues 327-347 traverse the membrane as a helical segment; that stretch reads LLSAGFALLGISFFALPAGIL. Residues 348-933 lie on the Cytoplasmic side of the membrane; that stretch reads GSGFALKVQE…ALSLPHVKLN (586 aa). An a 1,2-diacyl-sn-glycero-3-phospho-(1D-myo-inositol-4,5-bisphosphate)-binding site is contributed by Lys-362. An interaction with CALM region spans residues 371–379; that stretch reads AANLIQCVW. The segment at 405 to 465 is disordered; sequence SPTKKEQGEA…EGSPTKVQKS (61 aa). Positions 432 to 441 are enriched in polar residues; that stretch reads RGQSIKSRQA. Ser-448 bears the Phosphoserine mark. Residues 522 to 529 are interaction with CALM; the sequence is VIRAIRIM. Residues 578–598 are disordered; sequence KGQMTSDKKSREKITAEHETT. Over residues 583–598 the composition is skewed to basic and acidic residues; it reads SDKKSREKITAEHETT. The residue at position 832 (Ser-832) is a Phosphoserine. The interval 878 to 933 is disordered; sequence GAEETETDTFDGTPPPAGEAAFSSDSLRTGRSRSSQNICKTGDSTDALSLPHVKLN. A compositionally biased stretch (polar residues) spans 900 to 924; the sequence is SSDSLRTGRSRSSQNICKTGDSTDA.

The protein belongs to the potassium channel family. KQT (TC 1.A.1.15) subfamily. Kv7.5/KCNQ5 sub-subfamily. In terms of assembly, homotetramer; forms a functional homotetrameric channel resulting in the expression of a small M-current. Heterotetramer with KCNQ3; forms heterotetrameric M-channel responsible for the native M-current. Heterotetramer with KCNQ1; forms a functional voltage-gated potassium channel. Interacts (via C-terminus) with calmodulin/CALM; forms a heterooctameric structure (with 4:4 KCNQ1:CALM stoichiometry); the interaction is calcium-independent, constitutive and participates in the channel function. Strongly expressed in brain. Also expressed in colon, lung and uterus.

It localises to the cell membrane. It catalyses the reaction K(+)(in) = K(+)(out). With respect to regulation, phosphatidylinositol-4,5-bisphosphate (PIP2) is essential to activate KCNQ5 channel by inducing the coupling of the voltage-sensing domain (VSD) and the pore-forming domain (PD). Calcium suppresses KCNQ5 channel current through calcium-bound CALM C-terminus. Therefore CALM acts as calcium sensor that controls channel activity. Zinc potentiates channel activity in a pH-dependent manner. The activity is modulated by small changes in cell volume. Activated by the anticonvulsant retigabine. Inhibited by linopirdine and XE991. Its function is as follows. Pore-forming subunit of the voltage-gated potassium (Kv) channel broadly expressed in brain and skeletal muscle and involved in the regulation of neuronal excitability. Associates with KCNQ3/Kv7.3 pore-forming subunit to form a potassium channel which contributes to M-type current, a slowly activating and deactivating potassium conductance which plays a critical role in determining the subthreshold electrical excitability of neurons. Contributes, with other potassium channels, to the molecular diversity of a heterogeneous population of M-channels, varying in kinetic and pharmacological properties, which underlie this physiologically important current. Also forms a functional channel with KCNQ1/Kv7.1 subunit that may contribute to vasoconstriction and hypertension. Channel may be selectively permeable in vitro to other cations besides potassium, in decreasing order of affinity K(+) = Rb(+) &gt; Cs(+) &gt; Na(+). In Mus musculus (Mouse), this protein is Potassium voltage-gated channel subfamily KQT member 5.